The primary structure comprises 202 residues: MYEGPVQDLIDELGKLPGVGPKSAQRIAFHLLSVEPPEIDRLKNALQRVRDGVQFCVVCGTVSDKEHCRICADPRRDRTVICVVEEPKDVQAVERTREFKGRYHVLGGALDPLSGVGPDQLRIRELLARIGNQEDGVDVSEVIIATDPNTEGEATATYLVRMLRDFPGLTVSRLASGLPMGGDLEFADELTLGRALSGRRTL.

A C4-type zinc finger spans residues 56-71; that stretch reads CVVCGTVSDKEHCRIC. The 101-residue stretch at 79-179 folds into the Toprim domain; sequence TVICVVEEPK…TVSRLASGLP (101 aa).

This sequence belongs to the RecR family.

In terms of biological role, may play a role in DNA repair. It seems to be involved in an RecBC-independent recombinational process of DNA repair. It may act with RecF and RecO. The polypeptide is Recombination protein RecR (Rhodococcus jostii (strain RHA1)).